Here is a 236-residue protein sequence, read N- to C-terminus: Small ribosomal subunit protein uS2c (236 aa).

It belongs to the universal ribosomal protein uS2 family.

It localises to the plastid. The protein resides in the chloroplast. The polypeptide is Small ribosomal subunit protein uS2c (rps2) (Lotus japonicus (Lotus corniculatus var. japonicus)).